The sequence spans 426 residues: Adenylosuccinate synthetase 2 (426 aa).

Residues 12 to 18 (GDEGKGK) and 40 to 42 (GHT) contribute to the GTP site. The Proton acceptor role is filled by D13. Mg(2+) contacts are provided by D13 and G40. IMP contacts are provided by residues 13 to 16 (DEGK), 38 to 41 (NAGH), R147, N223, T238, and R302. H41 (proton donor) is an active-site residue. 298 to 304 (TNTGRRR) contributes to the substrate binding site. Residues R304, 330 to 332 (KLD), and 412 to 414 (GVG) each bind GTP.

The protein belongs to the adenylosuccinate synthetase family. As to quaternary structure, homodimer. Mg(2+) is required as a cofactor.

The protein resides in the cytoplasm. The catalysed reaction is IMP + L-aspartate + GTP = N(6)-(1,2-dicarboxyethyl)-AMP + GDP + phosphate + 2 H(+). Its pathway is purine metabolism; AMP biosynthesis via de novo pathway; AMP from IMP: step 1/2. Plays an important role in the de novo pathway and in the salvage pathway of purine nucleotide biosynthesis. Catalyzes the first committed step in the biosynthesis of AMP from IMP. The chain is Adenylosuccinate synthetase 2 from Laccaria bicolor (strain S238N-H82 / ATCC MYA-4686) (Bicoloured deceiver).